Here is a 78-residue protein sequence, read N- to C-terminus: ATP synthase subunit c (78 aa).

2 helical membrane passes run 12–32 (IGAGLACTGMGGAAVGVGHVV) and 54–74 (FIGIAFAEALGIFSFLVALLL).

The protein belongs to the ATPase C chain family. In terms of assembly, F-type ATPases have 2 components, F(1) - the catalytic core - and F(0) - the membrane proton channel. F(1) has five subunits: alpha(3), beta(3), gamma(1), delta(1), epsilon(1). F(0) has four main subunits: a(1), b(1), b'(1) and c(10-14). The alpha and beta chains form an alternating ring which encloses part of the gamma chain. F(1) is attached to F(0) by a central stalk formed by the gamma and epsilon chains, while a peripheral stalk is formed by the delta, b and b' chains.

It is found in the cellular chromatophore membrane. F(1)F(0) ATP synthase produces ATP from ADP in the presence of a proton or sodium gradient. F-type ATPases consist of two structural domains, F(1) containing the extramembraneous catalytic core and F(0) containing the membrane proton channel, linked together by a central stalk and a peripheral stalk. During catalysis, ATP synthesis in the catalytic domain of F(1) is coupled via a rotary mechanism of the central stalk subunits to proton translocation. Functionally, key component of the F(0) channel; it plays a direct role in translocation across the membrane. A homomeric c-ring of between 10-14 subunits forms the central stalk rotor element with the F(1) delta and epsilon subunits. This chain is ATP synthase subunit c, found in Rhodobacter capsulatus (Rhodopseudomonas capsulata).